A 440-amino-acid polypeptide reads, in one-letter code: T-box transcription factor T homolog 2 (440 aa).

Positions 44-215 form a DNA-binding region, T-box; it reads LWEKFKSLTN…HNPFAKAFLD (172 aa). Disordered stretches follow at residues 282–303 and 393–440; these read APYP…DTAA and TTAS…MPSM. The segment covering 409 to 440 has biased composition (polar residues); the sequence is STDSGYGHSTTPPAPQTRITSNNWSPMTMPSM.

Mesoderm and notochord.

It is found in the nucleus. Involved in the transcriptional regulation of genes required for mesoderm formation and differentiation. The polypeptide is T-box transcription factor T homolog 2 (Branchiostoma floridae (Florida lancelet)).